The following is a 249-amino-acid chain: Enolase-phosphatase E1 (249 aa).

Residues aspartate 9 and glutamate 11 each coordinate Mg(2+). Substrate is bound by residues 137–138 and lysine 177; that span reads SS. A Mg(2+)-binding site is contributed by aspartate 204.

It belongs to the HAD-like hydrolase superfamily. MasA/MtnC family. As to quaternary structure, monomer. It depends on Mg(2+) as a cofactor.

It is found in the cytoplasm. Its subcellular location is the nucleus. It carries out the reaction 5-methylsulfanyl-2,3-dioxopentyl phosphate + H2O = 1,2-dihydroxy-5-(methylsulfanyl)pent-1-en-3-one + phosphate. It functions in the pathway amino-acid biosynthesis; L-methionine biosynthesis via salvage pathway; L-methionine from S-methyl-5-thio-alpha-D-ribose 1-phosphate: step 3/6. It participates in amino-acid biosynthesis; L-methionine biosynthesis via salvage pathway; L-methionine from S-methyl-5-thio-alpha-D-ribose 1-phosphate: step 4/6. Its function is as follows. Bifunctional enzyme that catalyzes the enolization of 2,3-diketo-5-methylthiopentyl-1-phosphate (DK-MTP-1-P) into the intermediate 2-hydroxy-3-keto-5-methylthiopentenyl-1-phosphate (HK-MTPenyl-1-P), which is then dephosphorylated to form the acireductone 1,2-dihydroxy-3-keto-5-methylthiopentene (DHK-MTPene). This Lodderomyces elongisporus (strain ATCC 11503 / CBS 2605 / JCM 1781 / NBRC 1676 / NRRL YB-4239) (Yeast) protein is Enolase-phosphatase E1.